The primary structure comprises 529 residues: Peptide chain release factor 3 (529 aa).

A tr-type G domain is found at 11–280; sequence SKRRTFAIIS…GLTEWAPAPK (270 aa). GTP contacts are provided by residues 20-27, 88-92, and 142-145; these read SHPDAGKT, DTPGH, and NKLD.

The protein belongs to the TRAFAC class translation factor GTPase superfamily. Classic translation factor GTPase family. PrfC subfamily.

It localises to the cytoplasm. Functionally, increases the formation of ribosomal termination complexes and stimulates activities of RF-1 and RF-2. It binds guanine nucleotides and has strong preference for UGA stop codons. It may interact directly with the ribosome. The stimulation of RF-1 and RF-2 is significantly reduced by GTP and GDP, but not by GMP. The protein is Peptide chain release factor 3 of Vibrio parahaemolyticus serotype O3:K6 (strain RIMD 2210633).